The primary structure comprises 942 residues: Protein inturned (942 aa).

Basic and acidic residues predominate over residues 1 to 13 (MADPARRDPRGRA). Disordered stretches follow at residues 1-54 (MADP…LEPE) and 129-150 (PKRHHKKKSSNTGPVSILKHQS). Residues 22 to 32 (SQEEEEEESDS) are compositionally biased toward acidic residues. Over residues 33–48 (DAGASSLGSCSSASSD) the composition is skewed to low complexity. Residues 138–150 (SNTGPVSILKHQS) show a composition bias toward polar residues. The region spanning 189 to 267 (LVGVIHQTKW…PMQVKLTFEN (79 aa)) is the PDZ domain. 2 positions are modified to phosphoserine: serine 674 and serine 678. Residues 707-752 (KARKPSPSRIGGGREPGEGEENVGLSPHTTPDTVRKQRESEGSDDN) form a disordered region.

This sequence belongs to the inturned family. In terms of assembly, component of the CPLANE (ciliogenesis and planar polarity effectors) complex, composed of INTU, FUZ and WDPCP. Interacts with CPLANE1. Interacts with NPHP4 and DAAM1; INTU is mediating the interaction between NPHP4 and DAAM1.

It localises to the cytoplasm. Its subcellular location is the cell surface. The protein localises to the cytoskeleton. The protein resides in the cilium basal body. It is found in the microtubule organizing center. It localises to the centrosome. Its subcellular location is the centriole. Plays a key role in ciliogenesis and embryonic development. Regulator of cilia formation by controlling the organization of the apical actin cytoskeleton and the positioning of the basal bodies at the apical cell surface, which in turn is essential for the normal orientation of elongating ciliary microtubules. Plays a key role in definition of cell polarity via its role in ciliogenesis but not via conversion extension. Has an indirect effect on hedgehog signaling. Proposed to function as core component of the CPLANE (ciliogenesis and planar polarity effectors) complex involved in the recruitment of peripheral IFT-A proteins to basal bodies. Required for recruitment of CPLANE2 to the mother centriole. Binds phosphatidylinositol 3-phosphate with highest affinity, followed by phosphatidylinositol 4-phosphate and phosphatidylinositol 5-phosphate. In Rattus norvegicus (Rat), this protein is Protein inturned (Intu).